A 120-amino-acid polypeptide reads, in one-letter code: NAD(P)H-quinone oxidoreductase subunit 3, chloroplastic (120 aa).

3 helical membrane passes run 9-29 (YFWL…PISS), 64-84 (MFAS…PWAM), and 89-109 (LGVP…VGSV).

It belongs to the complex I subunit 3 family. In terms of assembly, NDH is composed of at least 16 different subunits, 5 of which are encoded in the nucleus.

It is found in the plastid. The protein localises to the chloroplast thylakoid membrane. It catalyses the reaction a plastoquinone + NADH + (n+1) H(+)(in) = a plastoquinol + NAD(+) + n H(+)(out). The catalysed reaction is a plastoquinone + NADPH + (n+1) H(+)(in) = a plastoquinol + NADP(+) + n H(+)(out). NDH shuttles electrons from NAD(P)H:plastoquinone, via FMN and iron-sulfur (Fe-S) centers, to quinones in the photosynthetic chain and possibly in a chloroplast respiratory chain. The immediate electron acceptor for the enzyme in this species is believed to be plastoquinone. Couples the redox reaction to proton translocation, and thus conserves the redox energy in a proton gradient. This Huperzia lucidula (Shining clubmoss) protein is NAD(P)H-quinone oxidoreductase subunit 3, chloroplastic.